A 1070-amino-acid polypeptide reads, in one-letter code: Phosphatidylinositol 4,5-bisphosphate 3-kinase catalytic subunit beta isoform (1070 aa).

The PI3K-ABD domain occupies 26-115; the sequence is SDGSIPVDFL…LPVLKLVTRS (90 aa). The PI3K-RBD domain maps to 194-285; the sequence is GGKLIVAVHF…RALPHFILVE (92 aa). Ser-324 carries the phosphoserine modification. The C2 PI3K-type domain maps to 327-496; it reads WENNNPFQIV…NATALHVKFP (170 aa). The Nuclear localization signal signature appears at 410–418; it reads KVKTKKSTK. The PIK helical domain maps to 524-701; the sequence is ANVSSRGGKK…GVILEAYCRG (178 aa). A PI3K/PI4K catalytic domain is found at 772-1053; that stretch reads YVEKCKYMDS…KFDEALRESW (282 aa). Positions 778 to 784 are G-loop; it reads YMDSKMK. Positions 916–924 are catalytic loop; it reads GIGDRHSDN. Positions 935–961 are activation loop; sequence HIDFGHILGNFKSKFGIKRERVPFILT. Position 1070 is a phosphoserine; by autocatalysis (Ser-1070).

This sequence belongs to the PI3/PI4-kinase family. In terms of assembly, heterodimer of a catalytic subunit PIK3CB and a p85 regulatory subunit (PIK3R1, PIK3R2 or PIK3R3). Interaction with PIK3R2 is required for nuclear localization and nuclear export. Part of a complex with PIK3R1 and PTEN. Binding to PTEN may antagonize the lipid kinase activity under normal growth conditions. Part of a complex involved in autophagosome formation composed of PIK3C3 and PIK3R4. Interacts with BECN1, ATG14 and RAB5A. Post-translationally, autophosphorylation at Ser-1070 negatively regulates the phosphatidylinositol-4,5-bisphosphate 3-kinase activity. Expressed ubiquitously.

It is found in the cytoplasm. The protein localises to the nucleus. It carries out the reaction a 1,2-diacyl-sn-glycero-3-phospho-(1D-myo-inositol-4,5-bisphosphate) + ATP = a 1,2-diacyl-sn-glycero-3-phospho-(1D-myo-inositol-3,4,5-trisphosphate) + ADP + H(+). The catalysed reaction is 1-octadecanoyl-2-(5Z,8Z,11Z,14Z)-eicosatetraenoyl-sn-glycero-3-phospho-1D-myo-inositol 4,5-bisphosphate + ATP = 1-octadecanoyl-2-(5Z,8Z,11Z,14Z-eicosatetraenoyl)-sn-glycero-3-phospho-(1D-myo-inositol 3,4,5-triphosphate) + ADP + H(+). It catalyses the reaction L-seryl-[protein] + ATP = O-phospho-L-seryl-[protein] + ADP + H(+). It functions in the pathway phospholipid metabolism; phosphatidylinositol phosphate biosynthesis. Its function is as follows. Phosphoinositide-3-kinase (PI3K) phosphorylates phosphatidylinositol derivatives at position 3 of the inositol ring to produce 3-phosphoinositides. Uses ATP and PtdIns(4,5)P2 (phosphatidylinositol 4,5-bisphosphate) to generate phosphatidylinositol 3,4,5-trisphosphate (PIP3). PIP3 plays a key role by recruiting PH domain-containing proteins to the membrane, including AKT1 and PDPK1, activating signaling cascades involved in cell growth, survival, proliferation, motility and morphology. Involved in the activation of AKT1 upon stimulation by G-protein coupled receptors (GPCRs) ligands such as CXCL12, sphingosine 1-phosphate, and lysophosphatidic acid. May also act downstream receptor tyrosine kinases. Required in different signaling pathways for stable platelet adhesion and aggregation. Plays a role in platelet activation signaling triggered by GPCRs, alpha-IIb/beta-3 integrins (ITGA2B/ ITGB3) and ITAM (immunoreceptor tyrosine-based activation motif)-bearing receptors such as GP6. Regulates the strength of adhesion of ITGA2B/ ITGB3 activated receptors necessary for the cellular transmission of contractile forces. Required for platelet aggregation induced by F2 (thrombin) and thromboxane A2 (TXA2). Has a role in cell survival. May have a role in cell migration. Involved in the early stage of autophagosome formation. Modulates the intracellular level of PtdIns3P (phosphatidylinositol 3-phosphate) and activates PIK3C3 kinase activity. May act as a scaffold, independently of its lipid kinase activity to positively regulate autophagy. May have a role in insulin signaling as scaffolding protein in which the lipid kinase activity is not required. May have a kinase-independent function in regulating cell proliferation and in clathrin-mediated endocytosis. Mediator of oncogenic signal in cell lines lacking PTEN. The lipid kinase activity is necessary for its role in oncogenic transformation. Required for the growth of ERBB2 and RAS driven tumors. Also has a protein kinase activity showing autophosphorylation. This Homo sapiens (Human) protein is Phosphatidylinositol 4,5-bisphosphate 3-kinase catalytic subunit beta isoform (PIK3CB).